Reading from the N-terminus, the 239-residue chain is Endolytic peptidoglycan transglycosylase RlpA (239 aa).

Residues 1-25 form the signal peptide; it reads MTLTRKTLFLLTAAFGIHSFQTASA. Residues 160–239 enclose the SPOR domain; the sequence is VAENKDIFID…GMVRAVLTAG (80 aa).

Belongs to the RlpA family.

Lytic transglycosylase with a strong preference for naked glycan strands that lack stem peptides. The sequence is that of Endolytic peptidoglycan transglycosylase RlpA from Neisseria meningitidis serogroup A / serotype 4A (strain DSM 15465 / Z2491).